A 111-amino-acid chain; its full sequence is Large ribosomal subunit protein uL22 (111 aa).

The protein belongs to the universal ribosomal protein uL22 family. In terms of assembly, part of the 50S ribosomal subunit.

This protein binds specifically to 23S rRNA; its binding is stimulated by other ribosomal proteins, e.g. L4, L17, and L20. It is important during the early stages of 50S assembly. It makes multiple contacts with different domains of the 23S rRNA in the assembled 50S subunit and ribosome. Its function is as follows. The globular domain of the protein is located near the polypeptide exit tunnel on the outside of the subunit, while an extended beta-hairpin is found that lines the wall of the exit tunnel in the center of the 70S ribosome. In Clostridium tetani (strain Massachusetts / E88), this protein is Large ribosomal subunit protein uL22.